Consider the following 568-residue polypeptide: Protein OCTOPUS-like (568 aa).

Disordered regions lie at residues M1–T27, L78–F99, E168–P203, Q242–S276, P360–S428, D446–G512, and R526–H558. Over residues S82–G93 the composition is skewed to low complexity. Positions E168–G179 are enriched in acidic residues. Basic and acidic residues predominate over residues E180 to E193. S260 is modified (phosphoserine). The span at S400 to N423 shows a compositional bias: polar residues. Positions G532 to W546 are enriched in gly residues.

This sequence belongs to the OCTOPUS family. Post-translationally, phosphorylation at Ser-260 amplifies the promotion of protophloem differentiation.

It is found in the cell membrane. It localises to the cytoplasm. Potentiates primary root protophloem differentiation. Regulates roots architecture. In Arabidopsis thaliana (Mouse-ear cress), this protein is Protein OCTOPUS-like.